The chain runs to 283 residues: DNA repair protein RecO (283 aa).

Over residues 254 to 264 (SSPASVGSSAT) the composition is skewed to polar residues. The segment at 254 to 283 (SSPASVGSSATRYFAQGDTDENDRDPPGAR) is disordered.

The protein belongs to the RecO family.

Involved in DNA repair and RecF pathway recombination. The polypeptide is DNA repair protein RecO (Roseiflexus sp. (strain RS-1)).